The following is a 461-amino-acid chain: MLNLKVGIIGAGPSGLAMLRAFESEQKKGNPIPEIKCYEKQDNWGGMWNYTWRTGVGKYGEPIHGSMYKYLWSNGPKECLEFSDYTFMEHFKQPISSYPPREVLFDYIQGRIKQSNARDFIKFNTVARWVDYLEDKKQFRVIFDDLVKNETFEEYFDYLVVGTGHFSTPNMPYFKGIDSFPGTVMHAHDFRGADQFIDKDILLIGSSYSAEDIGVQCFKHGSKSVTISYRTNPIGAKWPKGIEEKPIVTHFEDNVAHFKDGSKKEYDAVILCTGYQHKFPFLPDNLRLKTKNNLYPDNLYKGVVFNENERLIFLGMQDQYYTFNMFDTQAWFARDYMLGRIALPNKEIRDKDIAKWVELEKTSVTGEEHVDFQTDYIKELIEMTDYPTFDLDRVAEMFKSWLNDKETNILNYRDKVYTSVMTGVTAEEHHTPWMKELDDSLERYLDEVEVDELELSKENYY.

Residues Ser14, Glu39, Lys40, Gln41, Met47, Trp48, and His64 each coordinate FAD. Residues Trp72 and Asn74 each contribute to the NADP(+) site. Positions 74 and 127 each coordinate FAD. The NADP(+) site is built by Ser206, Ser207, Ser209, Arg230, and Thr231. 2 residues coordinate FAD: Gln319 and Thr322. Position 413 (Arg413) interacts with NADP(+).

It belongs to the FMO family. FAD serves as cofactor.

It catalyses the reaction trimethylamine + NADPH + O2 = trimethylamine N-oxide + NADP(+) + H2O. Its function is as follows. Catalyzes the oxidation of trimethylamine (TMA) to produce trimethylamine N-oxide (TMAO). The produced TMAO is accumulated in the cell, functioning as a piezolyte, improving both growth and survival at high hydrostatic pressure (HHP). The protein is Trimethylamine monooxygenase of Myroides profundi.